The sequence spans 77 residues: Acyl carrier protein (77 aa).

A Carrier domain is found at 2–77; sequence ADVMERVTKI…DVVDYINNNQ (76 aa). O-(pantetheine 4'-phosphoryl)serine is present on Ser-37.

Belongs to the acyl carrier protein (ACP) family. In terms of processing, 4'-phosphopantetheine is transferred from CoA to a specific serine of apo-ACP by AcpS. This modification is essential for activity because fatty acids are bound in thioester linkage to the sulfhydryl of the prosthetic group.

It localises to the cytoplasm. It participates in lipid metabolism; fatty acid biosynthesis. In terms of biological role, carrier of the growing fatty acid chain in fatty acid biosynthesis. This chain is Acyl carrier protein, found in Shouchella clausii (strain KSM-K16) (Alkalihalobacillus clausii).